The following is a 417-amino-acid chain: Tryptophan decarboxylase (417 aa).

Lysine 263 carries the N6-(pyridoxal phosphate)lysine modification.

The protein belongs to the group II decarboxylase family. Requires pyridoxal 5'-phosphate as cofactor.

It localises to the cytoplasm. The enzyme catalyses L-tryptophan + H(+) = tryptamine + CO2. With respect to regulation, inhibited by (S)-alpha-fluoromethyltryptophan. Its function is as follows. Catalyzes the decarboxylation of tryptophan to tryptamine. Tryptamine is a neurotransmitter that induces the release of serotonin, which is suggested to modulate gastrointestinal motility. Therefore, the tryptophan decarboxylase from the gut bacteria Clostridium sporogenes (strain ATCC 15579) may influence host brain and behavior. Has weak activity with tyrosine. Activity against phenylalanine is undetectable. In Clostridium sporogenes (strain ATCC 15579), this protein is Tryptophan decarboxylase.